A 482-amino-acid chain; its full sequence is MSASVAVVSGFLRIPSIQKSQNPSFLFSRPKKSLVRPISASSSELPENVRNFWKWLRDQGVVSGKSVAEPAVVPEGLGLVARRDIGRNEVVLEIPKRLWINPETVTASKIGPLCGGLKPWVSVALFLIREKYEEESSWRVYLDMLPQSTDSTVFWSEEELAELKGTQLLSTTLGVKEYVENEFLKLEQEILLPNKDLFSSRITLDDFIWAFGILKSRAFSRLRGQNLVLIPLADLINHNPAIKTEDYAYEIKGAGLFSRDLLFSLKSPVYVKAGEQVYIQYDLNKSNAELALDYGFVESNPKRNSYTLTIEIPESDPFFGDKLDIAESNKMGETGYFDIVDGQTLPAGMLQYLRLVALGGPDAFLLESIFNNTIWGHLELPVSRTNEELICRVVRDACKSALSGFDTTIEEDEKLLDKGKLEPRLEMALKIRIGEKRVLQQIDQIFKDRELELDILEYYQERRLKDLGLVGEQGDIIFWETK.

Residues 1-57 constitute a chloroplast transit peptide; the sequence is MSASVAVVSGFLRIPSIQKSQNPSFLFSRPKKSLVRPISASSSELPENVRNFWKWLR. In terms of domain architecture, SET spans 59-282; that stretch reads QGVVSGKSVA…AGEQVYIQYD (224 aa). S-adenosyl-L-methionine-binding positions include 75–77 and arginine 217; that span reads EGL. Substrate is bound by residues arginine 217, arginine 221, and aspartate 234. 237–238 serves as a coordination point for S-adenosyl-L-methionine; the sequence is NH. Residues tyrosine 249, tyrosine 281, and tyrosine 294 each contribute to the substrate site.

This sequence belongs to the class V-like SAM-binding methyltransferase superfamily. Plant protein-lysine LSMT methyltransferase family.

The protein resides in the plastid. The protein localises to the chloroplast stroma. It catalyses the reaction [fructose-bisphosphate aldolase]-L-lysine + 3 S-adenosyl-L-methionine = [fructose-bisphosphate aldolase]-N(6),N(6),N(6)-trimethyl-L-lysine + 3 S-adenosyl-L-homocysteine + 3 H(+). Functionally, protein-lysine methyltransferase methylating chloroplastic fructose 1,6-bisphosphate aldolases. Can also use with low efficiency gamma-tocopherol methyltransferase as substrate, but not a cytosolic aldolase. Able to interact with unmethylated Rubisco, but unlike in pea, the complex is catalytically unproductive. This is [Fructose-bisphosphate aldolase]-lysine N-methyltransferase, chloroplastic (LSMT-L) from Arabidopsis thaliana (Mouse-ear cress).